The primary structure comprises 217 residues: Oxygen-evolving enhancer protein 3, chloroplastic (217 aa).

Disordered stretches follow at residues 1–25 and 73–95; these read MAQA…RRAG and PIKL…SDQA. The transit peptide at 1–63 directs the protein to the chloroplast; that stretch reads MAQAMASMTG…ATGIAGGALA (63 aa).

It belongs to the PsbQ family.

The protein resides in the plastid. Its subcellular location is the chloroplast thylakoid membrane. The polypeptide is Oxygen-evolving enhancer protein 3, chloroplastic (Oryza sativa subsp. indica (Rice)).